Here is a 763-residue protein sequence, read N- to C-terminus: Protein translocase subunit SecA 2 (763 aa).

ATP-binding positions include glutamine 83, 101-105 (GEGKT), and aspartate 490.

This sequence belongs to the SecA family. As to quaternary structure, monomer and homodimer. Part of the essential Sec protein translocation apparatus which comprises SecA, SecYEG and auxiliary proteins SecDF. Other proteins may also be involved.

Its subcellular location is the cell membrane. The protein resides in the cytoplasm. It carries out the reaction ATP + H2O + cellular proteinSide 1 = ADP + phosphate + cellular proteinSide 2.. In terms of biological role, part of the Sec protein translocase complex. Interacts with the SecYEG preprotein conducting channel. Has a central role in coupling the hydrolysis of ATP to the transfer of proteins into and across the cell membrane, serving as an ATP-driven molecular motor driving the stepwise translocation of polypeptide chains across the membrane. The sequence is that of Protein translocase subunit SecA 2 from Corynebacterium glutamicum (strain ATCC 13032 / DSM 20300 / JCM 1318 / BCRC 11384 / CCUG 27702 / LMG 3730 / NBRC 12168 / NCIMB 10025 / NRRL B-2784 / 534).